A 2176-amino-acid chain; its full sequence is Nonribosomal peptide synthetase sirP (2176 aa).

A compositionally biased stretch (basic and acidic residues) spans 16-31 (EGLTGDDHSPESRRDF). The disordered stretch occupies residues 16–38 (EGLTGDDHSPESRRDFPMSQSSG). An adenylation 1 region spans residues 51-434 (FERIASQFPE…LGRKDRVVKN (384 aa)). Residues 534 to 610 (SSPSSNLYVV…RICDTLSATI (77 aa)) enclose the Carrier 1 domain. At Ser571 the chain carries O-(pantetheine 4'-phosphoryl)serine. A condensation 1 region spans residues 643–1073 (YMTAIQVNMI…MMNQLEINDL (431 aa)). An adenylation 2 region spans residues 1094–1474 (FEEVVDTWPD…GRIDNQVKVR (381 aa)). A Carrier 2 domain is found at 1570 to 1646 (PIEGTTERII…DLALAIDKHI (77 aa)). O-(pantetheine 4'-phosphoryl)serine is present on Ser1606. The condensation 2 stretch occupies residues 1661-2070 (QNTVLSHLEE…VQLMAAFRYL (410 aa)). The Carrier 3 domain maps to 2106–2176 (QEMIDLVREA…TAELIAGAVE (71 aa)). An O-(pantetheine 4'-phosphoryl)serine modification is found at Ser2140.

The protein belongs to the NRP synthetase family.

It functions in the pathway mycotoxin biosynthesis. Its function is as follows. Nonribosomal peptide synthetase; part of the gene cluster that mediates the biosynthesis of sirodesmin PL, an epipolythiodioxopiperazine (ETP) characterized by a disulfide bridged cyclic dipeptide and that acts as a phytotoxin which is involved in the blackleg didease of canola. SirD catalyzes the O-prenylation of L-tyrosine (L-Tyr) in the presence of dimethylallyl diphosphate (DMAPP) to yield 4-O-dimethylallyl-L-Tyr, and therefore represents probably the first pathway-specific enzyme in the biosynthesis of sirodesmin PL. 4-O-dimethylallyl-L-Tyr, then undergoes condensation with L-Ser in a reaction catalyzed by the non-ribosomal peptide synthase sirP to form the diketopiperazine (DKP) backbone. Further bishydroxylation of the DKP performed by the cytochrome P450 monooxygenase sirC leads to the production of the intermediate phomamide. This step is essential to form the reactive thiol group required for toxicity of sirodesmin PL. The next steps of sirodesmin biosynthesis are not well understood yet, but some predictions could be made from intermediate compounds identification. Phomamide is converted into phomalizarine via oxidation, probably by sirT. Further oxidation, methylation (by sirM or sirN) and reduction steps convert phomalizarine to deacetyl sirodesmin. Finally, acetyltransferase sirH probably acetylates deacetyl sirodesmin to produce sirodesmin PL. This Leptosphaeria maculans (Blackleg fungus) protein is Nonribosomal peptide synthetase sirP.